Reading from the N-terminus, the 58-residue chain is Large ribosomal subunit protein eL37 (58 aa).

A compositionally biased stretch (polar residues) spans 1–17 (MTGAGTPSQGKKNTTTH). A disordered region spans residues 1 to 26 (MTGAGTPSQGKKNTTTHTKCRRCGEK). Positions 20, 23, 35, and 38 each coordinate Zn(2+). The segment at 20–38 (CRRCGEKSYHTKKKVCSSC) adopts a C4-type zinc-finger fold.

The protein belongs to the eukaryotic ribosomal protein eL37 family. Requires Zn(2+) as cofactor.

Its function is as follows. Binds to the 23S rRNA. In Halobacterium salinarum (strain ATCC 29341 / DSM 671 / R1), this protein is Large ribosomal subunit protein eL37.